A 36-amino-acid polypeptide reads, in one-letter code: Mu/kappa-theraphotoxin-Ap1a (36 aa).

Disulfide bonds link cysteine 3-cysteine 18, cysteine 10-cysteine 23, and cysteine 17-cysteine 30. Phenylalanine 36 carries the phenylalanine amide modification.

This sequence belongs to the neurotoxin 10 (Hwtx-1) family. As to expression, expressed by the venom gland.

It is found in the secreted. Functionally, inhibitor of voltage-gated potassium and sodium channels. Among other potassium channels, it selectively inhibits Kv10.1/KCNH1/EAG1 (IC(50)=236 nM) by shifting the voltage dependence of channel activation in a depolarising direction, it shows a maximum inhibition of 80% at saturating concentrations, it shows fast on-rates, and is poorly reversible. It also slightly affects channel inactivation, when the membrane is highly depolarised (&gt;+80 mV). It shows similar potency on Nav1.7/SCN9A (IC(50)=222 nM) and lower potency on Nav1.2/SCN2A (IC(50)=519 nM). This chain is Mu/kappa-theraphotoxin-Ap1a, found in Avicularia purpurea (Ecuadorian purple pinktoe tarantula).